The primary structure comprises 325 residues: Glutarate 2-hydroxylase (325 aa).

The Fe cation site is built by His160, Asp162, and His292.

It belongs to the glutarate hydroxylase family. In terms of assembly, homotetramer. Fe(2+) serves as cofactor.

It carries out the reaction glutarate + 2-oxoglutarate + O2 = (S)-2-hydroxyglutarate + succinate + CO2. It functions in the pathway amino-acid degradation. In terms of biological role, acts as an alpha-ketoglutarate-dependent dioxygenase catalyzing hydroxylation of glutarate (GA) to L-2-hydroxyglutarate (L2HG). Functions in a L-lysine degradation pathway that proceeds via cadaverine, glutarate and L-2-hydroxyglutarate. The sequence is that of Glutarate 2-hydroxylase from Escherichia coli (strain K12 / MC4100 / BW2952).